A 374-amino-acid chain; its full sequence is UDP-N-acetylglucosamine--N-acetylmuramyl-(pentapeptide) pyrophosphoryl-undecaprenol N-acetylglucosamine transferase (374 aa).

UDP-N-acetyl-alpha-D-glucosamine is bound by residues 13-15, Asn-124, Arg-165, Ser-193, and Gln-294; that span reads TGG.

This sequence belongs to the glycosyltransferase 28 family. MurG subfamily.

It is found in the cell inner membrane. It carries out the reaction di-trans,octa-cis-undecaprenyl diphospho-N-acetyl-alpha-D-muramoyl-L-alanyl-D-glutamyl-meso-2,6-diaminopimeloyl-D-alanyl-D-alanine + UDP-N-acetyl-alpha-D-glucosamine = di-trans,octa-cis-undecaprenyl diphospho-[N-acetyl-alpha-D-glucosaminyl-(1-&gt;4)]-N-acetyl-alpha-D-muramoyl-L-alanyl-D-glutamyl-meso-2,6-diaminopimeloyl-D-alanyl-D-alanine + UDP + H(+). The protein operates within cell wall biogenesis; peptidoglycan biosynthesis. In terms of biological role, cell wall formation. Catalyzes the transfer of a GlcNAc subunit on undecaprenyl-pyrophosphoryl-MurNAc-pentapeptide (lipid intermediate I) to form undecaprenyl-pyrophosphoryl-MurNAc-(pentapeptide)GlcNAc (lipid intermediate II). The sequence is that of UDP-N-acetylglucosamine--N-acetylmuramyl-(pentapeptide) pyrophosphoryl-undecaprenol N-acetylglucosamine transferase from Rhizobium etli (strain ATCC 51251 / DSM 11541 / JCM 21823 / NBRC 15573 / CFN 42).